The chain runs to 350 residues: MNELDSLVTSARESFARSATPAELENAKAQFLGKSGRLTELMKGMAQLSPEEKKTRGAAINVAKQAVEAALAARRQELADAELQAQLKAEALDVTLPGRQRGRGGLHPVSLTLERIERIFGSMGFEVADGPEIETDWFNFTALNTPEDHPARSMHDTFYVEGGTPEAPNLLRTHTSPMQVRYAVQHVKKHRGLIDAGQAMPEIRVIAPGRTYRVDSDATHSPMFHQCEGLWIGENVSFKDLKVVFTDFCKTFFESDDLVLRFRPSFFPFTEPSAEIDIQFQSGPLAGKWLEVAGSGQVHPNVVRNMGLDPERFIGFAFGMGPDRLTMLRYGVNDLRLFFDGDIRFLSQFQ.

Glu271 contributes to the Mg(2+) binding site.

Belongs to the class-II aminoacyl-tRNA synthetase family. Phe-tRNA synthetase alpha subunit type 1 subfamily. In terms of assembly, tetramer of two alpha and two beta subunits. Mg(2+) serves as cofactor.

The protein localises to the cytoplasm. The catalysed reaction is tRNA(Phe) + L-phenylalanine + ATP = L-phenylalanyl-tRNA(Phe) + AMP + diphosphate + H(+). In Acidovorax ebreus (strain TPSY) (Diaphorobacter sp. (strain TPSY)), this protein is Phenylalanine--tRNA ligase alpha subunit.